Here is a 451-residue protein sequence, read N- to C-terminus: Glutamyl-tRNA reductase (451 aa).

Substrate is bound by residues Thr-47–Arg-50, Ser-132, Glu-137–Gln-139, and Gln-143. Residue Cys-48 is the Nucleophile of the active site. Ala-212–Asn-217 lines the NADP(+) pocket.

It belongs to the glutamyl-tRNA reductase family. As to quaternary structure, homodimer.

The catalysed reaction is (S)-4-amino-5-oxopentanoate + tRNA(Glu) + NADP(+) = L-glutamyl-tRNA(Glu) + NADPH + H(+). It functions in the pathway porphyrin-containing compound metabolism; protoporphyrin-IX biosynthesis; 5-aminolevulinate from L-glutamyl-tRNA(Glu): step 1/2. Catalyzes the NADPH-dependent reduction of glutamyl-tRNA(Glu) to glutamate 1-semialdehyde (GSA). This Psychrobacter sp. (strain PRwf-1) protein is Glutamyl-tRNA reductase.